The chain runs to 344 residues: tRNA N6-adenosine threonylcarbamoyltransferase (344 aa).

The Fe cation site is built by His-114 and His-118. Substrate-binding positions include 136–140 (LVSGG), Asp-170, Gly-183, Asp-187, and Asn-278. Position 306 (Asp-306) interacts with Fe cation.

Belongs to the KAE1 / TsaD family. Requires Fe(2+) as cofactor.

Its subcellular location is the cytoplasm. It catalyses the reaction L-threonylcarbamoyladenylate + adenosine(37) in tRNA = N(6)-L-threonylcarbamoyladenosine(37) in tRNA + AMP + H(+). Its function is as follows. Required for the formation of a threonylcarbamoyl group on adenosine at position 37 (t(6)A37) in tRNAs that read codons beginning with adenine. Is involved in the transfer of the threonylcarbamoyl moiety of threonylcarbamoyl-AMP (TC-AMP) to the N6 group of A37, together with TsaE and TsaB. TsaD likely plays a direct catalytic role in this reaction. This Mycobacteroides abscessus (strain ATCC 19977 / DSM 44196 / CCUG 20993 / CIP 104536 / JCM 13569 / NCTC 13031 / TMC 1543 / L948) (Mycobacterium abscessus) protein is tRNA N6-adenosine threonylcarbamoyltransferase.